A 341-amino-acid polypeptide reads, in one-letter code: Elongation factor G (341 aa).

The protein belongs to the GTP-binding elongation factor family. EF-G/EF-2 subfamily.

Its subcellular location is the cytoplasm. Functionally, catalyzes the GTP-dependent ribosomal translocation step during translation elongation. During this step, the ribosome changes from the pre-translocational (PRE) to the post-translocational (POST) state as the newly formed A-site-bound peptidyl-tRNA and P-site-bound deacylated tRNA move to the P and E sites, respectively. Catalyzes the coordinated movement of the two tRNA molecules, the mRNA and conformational changes in the ribosome. This is Elongation factor G (fus) from Streptomyces ramocissimus.